The chain runs to 161 residues: Chorion class B protein L12 (161 aa).

The signal sequence occupies residues 1 to 21 (MAAKLILFVCATALVAQSVLS). Positions 22–52 (IGCGCGGRGYGGLGYGGLGYGGLGGGCGRGF) are left arm. A run of 3 repeats spans residues 30–34 (GYGGL), 35–39 (GYGGL), and 40–44 (GYGGL). The segment at 30–44 (GYGGLGYGGLGYGGL) is 3 X 5 AA tandem repeats of G-Y-G-G-L. Residues 53-121 (SGGGLPVATA…GNGAVGITRE (69 aa)) are central domain. Residues 122 to 161 (GGFGYGAGYGDGYGLGFGGYGGGYGLGNGGYGGCGCGWGY) are right arm (Gly-rich tandem repeats).

It belongs to the chorion protein family.

This protein is one of many from the eggshell of the silk moth. The sequence is that of Chorion class B protein L12 from Bombyx mori (Silk moth).